The chain runs to 185 residues: Elongation factor P (185 aa).

Belongs to the elongation factor P family.

It localises to the cytoplasm. It participates in protein biosynthesis; polypeptide chain elongation. Involved in peptide bond synthesis. Stimulates efficient translation and peptide-bond synthesis on native or reconstituted 70S ribosomes in vitro. Probably functions indirectly by altering the affinity of the ribosome for aminoacyl-tRNA, thus increasing their reactivity as acceptors for peptidyl transferase. This Paraburkholderia xenovorans (strain LB400) protein is Elongation factor P.